The following is a 514-amino-acid chain: DNA damage-binding protein CMR1 (514 aa).

The tract at residues 26 to 116 (NLDSLSQSIK…VKQEEKEELS (91 aa)) is disordered. A compositionally biased stretch (basic and acidic residues) spans 34 to 44 (IKRELPRASET). Basic residues predominate over residues 45–55 (KKRKTTPRTKA). Basic and acidic residues-rich tracts occupy residues 56-65 (VKKEDVEPSR) and 92-116 (KFED…EELS). WD repeat units follow at residues 180 to 221 (ISHT…DDSE), 229 to 269 (PHGK…STEV), 280 to 320 (DYAL…KPLK), 327 to 367 (LHDK…KANA), 385 to 423 (SSRL…LIPD), 438 to 481 (GRWV…IAHL), and 483 to 514 (DSVG…YLFE).

The protein belongs to the WD repeat DDB2/WDR76 family.

Its function is as follows. DNA-binding protein that binds to both single- and double-stranded DNA. Binds preferentially to UV-damaged DNA. May be involved in DNA-metabolic processes. The polypeptide is DNA damage-binding protein CMR1 (PRW1) (Scheffersomyces stipitis (strain ATCC 58785 / CBS 6054 / NBRC 10063 / NRRL Y-11545) (Yeast)).